The sequence spans 221 residues: Elongation factor Ts (221 aa).

The involved in Mg(2+) ion dislocation from EF-Tu stretch occupies residues 82 to 85; sequence TDFV.

The protein belongs to the EF-Ts family.

It is found in the cytoplasm. In terms of biological role, associates with the EF-Tu.GDP complex and induces the exchange of GDP to GTP. It remains bound to the aminoacyl-tRNA.EF-Tu.GTP complex up to the GTP hydrolysis stage on the ribosome. The chain is Elongation factor Ts from Synechococcus elongatus (strain ATCC 33912 / PCC 7942 / FACHB-805) (Anacystis nidulans R2).